Reading from the N-terminus, the 339-residue chain is MNDAAPDRQASVDFHLQALHPWLSRQDIAEICVNRPGQLWYEDRNGWNRQESGALTLDHLHALATATARFCDRDICPERPLLAASLPGGERVQIVVPPACEPGTLSLTIRKPARRIWPLSELLRDALDLPGVPGASQARPDPLLDPWRRGAWDDFLRLAVQAGKAILVAGQTGSGKTTLMNALSGEIPPRERIVTIEDVRELRLDPATNHVHLLYGTPTEGRTAAVSATELLRAALRMAPTRILLAELRGGEAFDFLQACASGHSGGISTCHAASADMALQRLTLMCMQHPNCQMLPYSTLRALVESVIDIVVVVERRAGQGARRRVVDIWYRDGLPAP.

This sequence belongs to the GSP E family.

The sequence is that of Type IV secretion system protein PtlH homolog (ptlH) from Bordetella bronchiseptica (strain ATCC BAA-588 / NCTC 13252 / RB50) (Alcaligenes bronchisepticus).